Here is a 174-residue protein sequence, read N- to C-terminus: MNYFELFKFSPAFDIDTAVLAERYRELQRAVHPDKFANDTEQQRLLSVQRTAQVNDGYQTLKDPIRRAEHMLSLRGIDLSHETTTVKDTAFLMQQMEWREALEDIRDSADPQECIDELYDSFAAYRTKLTKLLTAQLSSDSEEDALLAADQVRKLKFMAKLHDELTRIEDALLD.

A J domain is found at 2-74 (NYFELFKFSP…IRRAEHMLSL (73 aa)).

This sequence belongs to the HscB family. As to quaternary structure, interacts with HscA and stimulates its ATPase activity.

In terms of biological role, co-chaperone involved in the maturation of iron-sulfur cluster-containing proteins. Seems to help targeting proteins to be folded toward HscA. The chain is Co-chaperone protein HscB homolog from Shewanella sp. (strain MR-4).